Here is a 375-residue protein sequence, read N- to C-terminus: Neuropeptide Y receptor type 4-2 (375 aa).

Residues 1 to 39 (MNTSHLLALLLPKSPQGENRSKPLGTPYNFSEHCQDSVD) lie on the Extracellular side of the membrane. N2, N19, and N29 each carry an N-linked (GlcNAc...) asparagine glycan. Residues 40-60 (VMVFIVTSYSIETVVGVLGNL) traverse the membrane as a helical segment. Over 61-87 (CLMCVTVRQKEKANVTNLLIANLAFSD) the chain is Cytoplasmic. The helical transmembrane segment at 88 to 108 (FLMCLLCQPLTAVYTIMDYWI) threads the bilayer. The Extracellular portion of the chain corresponds to 109–116 (FGETLCKM). Residues C114 and C201 are joined by a disulfide bond. The helical transmembrane segment at 117–137 (SAFIQCMSVTVSILSLVLVAL) threads the bilayer. Residues 138–155 (ERHQLIINPTGWKPSISQ) lie on the Cytoplasmic side of the membrane. The chain crosses the membrane as a helical span at residues 156–176 (AYLGIVLIWVIACVLSLPFLA). Residues 177–212 (NSILENVFHKNHSKALEFLADKVVCTESWPLAHHRT) lie on the Extracellular side of the membrane. Residue N187 is glycosylated (N-linked (GlcNAc...) asparagine). The helical transmembrane segment at 213–233 (IYTTFLLLFQYCLPLGFILVC) threads the bilayer. Residues 234–263 (YARIYRRLQRQGRVFHKGTYSLRAGHMKQV) are Cytoplasmic-facing. A helical membrane pass occupies residues 264-284 (NVVLVVMVVAFAVLWLPLHVF). At 285–301 (NSLEDWHHEAIPICHGN) the chain is on the extracellular side. Residues 302 to 322 (LIFLVCHLLAMASTCVNPFIY) form a helical membrane-spanning segment. Topologically, residues 323–375 (GFLNTNFKKEIKALVLTCQQSAPLEESEHLPLSTVHTEVSKGSLRLSGRSNPI) are cytoplasmic. A lipid anchor (S-palmitoyl cysteine) is attached at C340.

It belongs to the G-protein coupled receptor 1 family.

Its subcellular location is the cell membrane. G protein-coupled receptor for PPY/pancreatic polypeptide/PP, NPY/neuropeptide Y and PYY/peptide YY that is negatively coupled to cAMP. The rank order of affinity for these polypeptides and their derivatives is PP, PP (2-36) and [Ile-31, Gln-34] PP &gt; [Pro-34] PYY &gt; PYY and [Leu-31, Pro-34] NPY &gt; NPY &gt; PYY (3-36) and NPY (2-36) &gt; PP (13-36) &gt; PP (31-36) &gt; NPY free acid. The sequence is that of Neuropeptide Y receptor type 4-2 from Homo sapiens (Human).